Consider the following 313-residue polypeptide: Porphobilinogen deaminase (313 aa).

An S-(dipyrrolylmethanemethyl)cysteine modification is found at Cys242.

Belongs to the HMBS family. In terms of assembly, monomer. Requires dipyrromethane as cofactor.

It catalyses the reaction 4 porphobilinogen + H2O = hydroxymethylbilane + 4 NH4(+). It participates in porphyrin-containing compound metabolism; protoporphyrin-IX biosynthesis; coproporphyrinogen-III from 5-aminolevulinate: step 2/4. Its function is as follows. Tetrapolymerization of the monopyrrole PBG into the hydroxymethylbilane pre-uroporphyrinogen in several discrete steps. The protein is Porphobilinogen deaminase of Pseudomonas putida (strain W619).